We begin with the raw amino-acid sequence, 125 residues long: Testis-specific protein LINC02914 (125 aa).

A compositionally biased stretch (basic and acidic residues) spans 1–12 (MHRKEPGARLEA). A disordered region spans residues 1–45 (MHRKEPGARLEATRGAARPHKQGTKPMITRPSVSQLGEGKCPSSQ).

Expressed in testes and ejaculated spermatozoa (at protein level).

It localises to the cytoplasm. The protein localises to the nucleus. Its subcellular location is the cell projection. It is found in the cilium. The protein resides in the flagellum. In terms of biological role, may play a role in the flagellum biology. The polypeptide is Testis-specific protein LINC02914 (Homo sapiens (Human)).